We begin with the raw amino-acid sequence, 129 residues long: uncharacterized protein (129 aa).

Belongs to the asfivirus C129R family.

The protein localises to the virion. Plays a role in the inhibition of type I interferon signaling pathway. Mechanistically, specifically interacts with 2',3'-cGAMP and cleaves it via its phosphodiesterase activity. In turn, prevents 2',3'-cGAMP interaction with host ER-resident STING1 leading to inhibition of downstream signaling pathway and type I interferon production. This is an uncharacterized protein from African swine fever virus (isolate Pig/Kenya/KEN-50/1950) (ASFV).